Consider the following 253-residue polypeptide: Ribosome maturation protein SBDS (253 aa).

This sequence belongs to the SDO1/SBDS family. As to quaternary structure, associates with the 60S ribosomal subunit.

It localises to the cytoplasm. It is found in the nucleus. The protein resides in the nucleolus. The protein localises to the nucleoplasm. Its subcellular location is the cytoskeleton. It localises to the spindle. Its function is as follows. Required for the assembly of mature ribosomes and ribosome biogenesis. Together with K10C3.5b/EFL1, triggers the GTP-dependent release of ribosome maturation factors from 60S pre-ribosomes in the cytoplasm, thereby activating ribosomes for translation competence by allowing 80S ribosome assembly. Required for normal levels of protein synthesis. May play a role in cellular stress resistance. May play a role in cellular response to DNA damage. May play a role in cell proliferation. The protein is Ribosome maturation protein SBDS (sbds-1) of Caenorhabditis elegans.